The following is a 181-amino-acid chain: Oligoribonuclease (181 aa).

An Exonuclease domain is found at 8-171; it reads LIWIDLEMTG…QDIQESIAEL (164 aa). Residue Y129 is part of the active site.

It belongs to the oligoribonuclease family.

It localises to the cytoplasm. Functionally, 3'-to-5' exoribonuclease specific for small oligoribonucleotides. This Shewanella putrefaciens (strain CN-32 / ATCC BAA-453) protein is Oligoribonuclease.